The primary structure comprises 570 residues: Formate--tetrahydrofolate ligase (570 aa).

65–72 (TPYGEGKT) contacts ATP.

The protein belongs to the formate--tetrahydrofolate ligase family.

It catalyses the reaction (6S)-5,6,7,8-tetrahydrofolate + formate + ATP = (6R)-10-formyltetrahydrofolate + ADP + phosphate. It functions in the pathway one-carbon metabolism; tetrahydrofolate interconversion. This is Formate--tetrahydrofolate ligase from Shewanella piezotolerans (strain WP3 / JCM 13877).